The sequence spans 289 residues: Diaminopimelate epimerase (289 aa).

Residues N13, Q47, and N67 each contribute to the substrate site. Residue C76 is the Proton donor of the active site. Substrate contacts are provided by residues 77–78, N167, N200, and 218–219; these read GN and ER. C227 functions as the Proton acceptor in the catalytic mechanism. 228 to 229 lines the substrate pocket; sequence GT.

It belongs to the diaminopimelate epimerase family. In terms of assembly, homodimer.

It localises to the cytoplasm. It carries out the reaction (2S,6S)-2,6-diaminopimelate = meso-2,6-diaminopimelate. Its pathway is amino-acid biosynthesis; L-lysine biosynthesis via DAP pathway; DL-2,6-diaminopimelate from LL-2,6-diaminopimelate: step 1/1. Its function is as follows. Catalyzes the stereoinversion of LL-2,6-diaminopimelate (L,L-DAP) to meso-diaminopimelate (meso-DAP), a precursor of L-lysine and an essential component of the bacterial peptidoglycan. This chain is Diaminopimelate epimerase, found in Burkholderia pseudomallei (strain 668).